The sequence spans 218 residues: Adenylate kinase (218 aa).

10-15 (GAGKGT) contributes to the ATP binding site. An NMP region spans residues 30 to 59 (STGDMLRAAINEGTPLGLEAKKVMDAGKLV). AMP-binding positions include T31, R36, 57 to 59 (KLV), 85 to 88 (GFPR), and Q92. An LID region spans residues 122-159 (GRRVHPASGRTYHVLFNPPAKEGVDDITGDPLVQREDD). ATP is bound by residues R123 and 132–133 (TY). Positions 156 and 167 each coordinate AMP. G203 is an ATP binding site.

It belongs to the adenylate kinase family. As to quaternary structure, monomer.

It is found in the cytoplasm. The enzyme catalyses AMP + ATP = 2 ADP. It functions in the pathway purine metabolism; AMP biosynthesis via salvage pathway; AMP from ADP: step 1/1. In terms of biological role, catalyzes the reversible transfer of the terminal phosphate group between ATP and AMP. Plays an important role in cellular energy homeostasis and in adenine nucleotide metabolism. The chain is Adenylate kinase from Chlorobium phaeobacteroides (strain BS1).